The sequence spans 389 residues: MLRPPMTKLVISNRESHRECEQVLQIGECAIVRSSSGEPWQLLNNGNSDSIDYALLQDILYEGYRLSTIYNIKSHTKSMKRLRRKLASIFSNSNFLLPLSKDGSSSSSQPHFYLSPSNSSLFDARKSSRSRGAVIKSPSTINIEKNRHSSNSGENQKMRLNLSMSTGNLCRAGVVRTPYPTSKQLHFDNDDGDEEDDTDDEGEADLVSIKTRSGRRNVLKSPPPPERIPSSMGASDAEEIDIKSHMKPLSVKIPANIFKTPTLDIPVDDDAEIDADVFPLPPPTPVNLKHGLFSIPSGRNSESARSRQTKRSPFGSVTSRTSSLDRRMSLSCLEDTSNYQKTQYLVFPLRTSSKKPYLLKFPEDMQEEDEKHNGSVWGSDTSLEEEIKV.

4 disordered regions span residues 119–156, 180–233, 294–321, and 362–389; these read SSLF…GENQ, PTSK…SSMG, SIPS…TSRT, and PEDM…EIKV. The span at 137 to 155 shows a compositional bias: polar residues; sequence SPSTINIEKNRHSSNSGEN. Positions 190 to 204 are enriched in acidic residues; the sequence is DDGDEEDDTDDEGEA.

This is an uncharacterized protein from Caenorhabditis elegans.